The following is an 87-amino-acid chain: MKTFEELFTELSEKARTRPAGSRTVAQLDAGVHAIGKKVVEEAAEVWMAAEYQSDEETAEEISQLLYHVQVLMLARGLRLEDVYRHL.

Belongs to the PRA-PH family.

Its subcellular location is the cytoplasm. It catalyses the reaction 1-(5-phospho-beta-D-ribosyl)-ATP + H2O = 1-(5-phospho-beta-D-ribosyl)-5'-AMP + diphosphate + H(+). It participates in amino-acid biosynthesis; L-histidine biosynthesis; L-histidine from 5-phospho-alpha-D-ribose 1-diphosphate: step 2/9. This chain is Phosphoribosyl-ATP pyrophosphatase, found in Thermobifida fusca (strain YX).